Reading from the N-terminus, the 414-residue chain is EARP and GARP complex-interacting protein 1 (414 aa).

Met1 carries the post-translational modification N-acetylmethionine. WD repeat units follow at residues 159 to 199, 209 to 249, 253 to 293, and 297 to 337; these read TAHG…SQAV, KGQL…QIYC, AHGQ…EPVK, and EHSH…SEPF. A disordered region spans residues 337–362; it reads FGHLVDDDDISDQEDHRSEEKSKEPL. Ser347 bears the Phosphoserine mark. Over residues 349–362 the composition is skewed to basic and acidic residues; sequence QEDHRSEEKSKEPL. The stretch at 372–412 is one WD 5 repeat; the sequence is EHEDSVYAVDWSSADPWLFASLSYDGRLVINRVPRALKYHI.

The protein belongs to the WD repeat EIPR1 family. In terms of assembly, interacts with two multisubunit tethering complexes: EARP composed of VPS50, VPS51, VPS52 and VPS53 subunits and GARP complex composed of VPS51, VPS52, VPS53 and VPS54 subunits. Interacts with SNAP29.

The protein resides in the golgi apparatus. It is found in the trans-Golgi network. Functionally, acts as a component of endosomal retrieval machinery that is involved in protein transport from early endosomes to either recycling endosomes or the trans-Golgi network. Mediates the recruitment of Golgi-associated retrograde protein (GARP) complex to the trans-Golgi network and controls early endosome-to-Golgi transport of internalized protein. Promotes the recycling of internalized transferrin receptor (TFRC) to the plasma membrane through interaction with endosome-associated recycling protein (EARP) complex. Controls proper insulin distribution and secretion, and retention of cargo in mature dense core vesicles. Required for the stability of the endosome-associated retrograde protein (EARP) complex subunits and for proper localization and association of EARP with membranes. The polypeptide is EARP and GARP complex-interacting protein 1 (Pongo abelii (Sumatran orangutan)).